A 158-amino-acid polypeptide reads, in one-letter code: Ribosome maturation factor RimP (158 aa).

Belongs to the RimP family.

The protein resides in the cytoplasm. In terms of biological role, required for maturation of 30S ribosomal subunits. This Leuconostoc mesenteroides subsp. mesenteroides (strain ATCC 8293 / DSM 20343 / BCRC 11652 / CCM 1803 / JCM 6124 / NCDO 523 / NBRC 100496 / NCIMB 8023 / NCTC 12954 / NRRL B-1118 / 37Y) protein is Ribosome maturation factor RimP.